We begin with the raw amino-acid sequence, 377 residues long: NADH dehydrogenase [ubiquinone] 1 alpha subcomplex subunit 9, mitochondrial (377 aa).

The N-terminal 35 residues, 1–35, are a transit peptide targeting the mitochondrion; it reads MAAAAQSRVVRVLSMSRSAITAIATSVCHGPPCRQ. The residue at position 175 (lysine 175) is an N6-succinyllysine. N6-acetyllysine occurs at positions 189 and 370.

The protein belongs to the complex I NDUFA9 subunit family. In terms of assembly, complex I is composed of 45 different subunits. This a component of the hydrophobic protein fraction. Interacts with BLOC1S1. Interacts with SLC2A4. Interacts with CLOCK. Interacts with RAB5IF. The cofactor is FAD. Post-translationally, acetylated on lysine residues. BLOC1S1 is required for acetylation. Acetylated by CLOCK in a circadian manner.

The protein localises to the mitochondrion matrix. Its function is as follows. Accessory subunit of the mitochondrial membrane respiratory chain NADH dehydrogenase (Complex I), that is believed not to be involved in catalysis. Required for proper complex I assembly. Complex I functions in the transfer of electrons from NADH to the respiratory chain. The immediate electron acceptor for the enzyme is believed to be ubiquinone. In Homo sapiens (Human), this protein is NADH dehydrogenase [ubiquinone] 1 alpha subcomplex subunit 9, mitochondrial (NDUFA9).